The following is a 729-amino-acid chain: U-box domain-containing protein 17 (729 aa).

Positions 304–378 constitute a U-box domain; sequence TVPKDFVCPI…VQWCTASGIS (75 aa). ARM repeat units follow at residues 438–477, 479–520, 523–562, and 564–601; these read KENRAYIAEAGAIPHLCRLLTSENAIAQENSVTAMLNLSI, EKNK…SLSA, EYKKRIAIVDQCVEALALLLQNGTPRGKKDAVTALYNLST, and PDNCSRMIEGGGVSSLVGALKNEGVAEEAAGALALLVR.

It catalyses the reaction S-ubiquitinyl-[E2 ubiquitin-conjugating enzyme]-L-cysteine + [acceptor protein]-L-lysine = [E2 ubiquitin-conjugating enzyme]-L-cysteine + N(6)-ubiquitinyl-[acceptor protein]-L-lysine.. The protein operates within protein modification; protein ubiquitination. In terms of biological role, functions as an E3 ubiquitin ligase. This is U-box domain-containing protein 17 (PUB17) from Arabidopsis thaliana (Mouse-ear cress).